The following is a 101-amino-acid chain: Small ribosomal subunit protein uS14 (101 aa).

Residues 51 to 70 are disordered; that stretch reads LPRDSSPSRQRNRCSQTGRP. The segment covering 52–68 has biased composition (polar residues); the sequence is PRDSSPSRQRNRCSQTG.

Belongs to the universal ribosomal protein uS14 family. In terms of assembly, part of the 30S ribosomal subunit. Contacts proteins S3 and S10.

Its function is as follows. Binds 16S rRNA, required for the assembly of 30S particles and may also be responsible for determining the conformation of the 16S rRNA at the A site. In Mannheimia succiniciproducens (strain KCTC 0769BP / MBEL55E), this protein is Small ribosomal subunit protein uS14.